The following is a 213-amino-acid chain: ATP phosphoribosyltransferase (213 aa).

Belongs to the ATP phosphoribosyltransferase family. Short subfamily. As to quaternary structure, heteromultimer composed of HisG and HisZ subunits.

The protein resides in the cytoplasm. It catalyses the reaction 1-(5-phospho-beta-D-ribosyl)-ATP + diphosphate = 5-phospho-alpha-D-ribose 1-diphosphate + ATP. It participates in amino-acid biosynthesis; L-histidine biosynthesis; L-histidine from 5-phospho-alpha-D-ribose 1-diphosphate: step 1/9. Catalyzes the condensation of ATP and 5-phosphoribose 1-diphosphate to form N'-(5'-phosphoribosyl)-ATP (PR-ATP). Has a crucial role in the pathway because the rate of histidine biosynthesis seems to be controlled primarily by regulation of HisG enzymatic activity. The sequence is that of ATP phosphoribosyltransferase from Nitrosococcus oceani (strain ATCC 19707 / BCRC 17464 / JCM 30415 / NCIMB 11848 / C-107).